An 843-amino-acid polypeptide reads, in one-letter code: Protein P (843 aa).

The segment at 1-177 (MPLSYQHFRK…FCGSPYSWEQ (177 aa)) is terminal protein domain (TP). The interval 178–346 (DLQHGRLVFQ…YCLCHIVNLI (169 aa)) is spacer. 2 disordered regions span residues 220–269 (KSRL…HNCA) and 291–316 (TSKG…RSRS). Residues 347-690 (EDWGPCTEHG…YLNLYPVARQ (344 aa)) form a polymerase/reverse transcriptase domain (RT) region. A Reverse transcriptase domain is found at 357–600 (EHRIRTPRTP…YSLNFMGYVI (244 aa)). Positions 429, 551, and 552 each coordinate Mg(2+).

This sequence belongs to the hepadnaviridae P protein family.

It carries out the reaction DNA(n) + a 2'-deoxyribonucleoside 5'-triphosphate = DNA(n+1) + diphosphate. It catalyses the reaction Endonucleolytic cleavage to 5'-phosphomonoester.. Its activity is regulated as follows. Activated by host HSP70 and HSP40 in vitro to be able to bind the epsilon loop of the pgRNA. Because deletion of the RNase H region renders the protein partly chaperone-independent, the chaperones may be needed indirectly to relieve occlusion of the RNA-binding site by this domain. Inhibited by several reverse-transcriptase inhibitors: Lamivudine, Adefovir and Entecavir. Multifunctional enzyme that converts the viral RNA genome into dsDNA in viral cytoplasmic capsids. This enzyme displays a DNA polymerase activity that can copy either DNA or RNA templates, and a ribonuclease H (RNase H) activity that cleaves the RNA strand of RNA-DNA heteroduplexes in a partially processive 3'- to 5'-endonucleasic mode. Neo-synthesized pregenomic RNA (pgRNA) are encapsidated together with the P protein, and reverse-transcribed inside the nucleocapsid. Initiation of reverse-transcription occurs first by binding the epsilon loop on the pgRNA genome, and is initiated by protein priming, thereby the 5'-end of (-)DNA is covalently linked to P protein. Partial (+)DNA is synthesized from the (-)DNA template and generates the relaxed circular DNA (RC-DNA) genome. After budding and infection, the RC-DNA migrates in the nucleus, and is converted into a plasmid-like covalently closed circular DNA (cccDNA). The activity of P protein does not seem to be necessary for cccDNA generation, and is presumably released from (+)DNA by host nuclear DNA repair machinery. This is Protein P from Homo sapiens (Human).